Consider the following 79-residue polypeptide: UPF0180 protein BCAH820_1484 (79 aa).

This sequence belongs to the UPF0180 family.

This chain is UPF0180 protein BCAH820_1484, found in Bacillus cereus (strain AH820).